A 170-amino-acid polypeptide reads, in one-letter code: Protein BTG1 (170 aa).

This sequence belongs to the BTG family.

Functionally, anti-proliferative protein. This is Protein BTG1 (BTG1) from Gallus gallus (Chicken).